A 728-amino-acid polypeptide reads, in one-letter code: Probable ubiquitin-conjugating enzyme protein 17 (728 aa).

A compositionally biased stretch (low complexity) spans 1-17 (MSSQASQRSSSTSAVAQ). Disordered stretches follow at residues 1 to 23 (MSSQASQRSSSTSAVAQKTRERR) and 123 to 155 (SSRSADEQKRRARRNSSASLSHKGTGYGTGSTR). The UBC core domain occupies 402–568 (DRTKRIAKEL…IEHATLNYAI (167 aa)). The active-site Glycyl thioester intermediate is the Cys495. Disordered stretches follow at residues 649-678 (PFAKEEAEESERLKREQSEKEEKQKKEAAA) and 709-728 (RTQPTGDYSVPSVNEPSTSS). Residues 658–678 (SERLKREQSEKEEKQKKEAAA) are compositionally biased toward basic and acidic residues. A compositionally biased stretch (polar residues) spans 710–728 (TQPTGDYSVPSVNEPSTSS).

The protein belongs to the ubiquitin-conjugating enzyme family.

The polypeptide is Probable ubiquitin-conjugating enzyme protein 17 (ubc-17) (Caenorhabditis elegans).